A 421-amino-acid polypeptide reads, in one-letter code: Gamma-glutamyl phosphate reductase (421 aa).

It belongs to the gamma-glutamyl phosphate reductase family.

It localises to the cytoplasm. The enzyme catalyses L-glutamate 5-semialdehyde + phosphate + NADP(+) = L-glutamyl 5-phosphate + NADPH + H(+). It participates in amino-acid biosynthesis; L-proline biosynthesis; L-glutamate 5-semialdehyde from L-glutamate: step 2/2. Catalyzes the NADPH-dependent reduction of L-glutamate 5-phosphate into L-glutamate 5-semialdehyde and phosphate. The product spontaneously undergoes cyclization to form 1-pyrroline-5-carboxylate. This chain is Gamma-glutamyl phosphate reductase, found in Stutzerimonas stutzeri (strain A1501) (Pseudomonas stutzeri).